A 280-amino-acid polypeptide reads, in one-letter code: Pre-mRNA-splicing factor PRP21 (280 aa).

One copy of the SURP motif 1 repeat lies at 11–49 (DIKTTVNYIKQHGVEFENKLLEDERFSFIKKDDPLHEYY). Positions 53–72 (MNEPTDTVSGEDNDRKSERE) are disordered. The SURP motif 2 repeat unit spans residues 95 to 135 (VIKLTARYYAKDKSIVEQMISKDGEARLNFMNSSHPLHKTF). 2 stretches are compositionally biased toward basic and acidic residues: residues 246–261 (EKIVSDQGKQKGGDSK) and 269–280 (AVGETRLKKSKK). A disordered region spans residues 246–280 (EKIVSDQGKQKGGDSKGKKRKIRAVGETRLKKSKK).

As to quaternary structure, belongs to the CWC complex (or CEF1-associated complex), a spliceosome sub-complex reminiscent of a late-stage spliceosome composed of the U2, U5 and U6 snRNAs and at least BUD13, BUD31, BRR2, CDC40, CEF1, CLF1, CUS1, CWC2, CWC15, CWC21, CWC22, CWC23, CWC24, CWC25, CWC27, ECM2, HSH155, IST3, ISY1, LEA1, MSL1, NTC20, PRP8, PRP9, PRP11, PRP19, PRP21, PRP22, PRP45, PRP46, SLU7, SMB1, SMD1, SMD2, SMD3, SMX2, SMX3, SNT309, SNU114, SPP2, SYF1, SYF2, RSE1 and YJU2.

It localises to the nucleus. In terms of biological role, mRNA splicing factors, PRP9, PRP11, and PRP21, are necessary for binding of the U2 snRNP to the pre-mRNA in an early step of spliceosome assembly. The polypeptide is Pre-mRNA-splicing factor PRP21 (PRP21) (Saccharomyces cerevisiae (strain ATCC 204508 / S288c) (Baker's yeast)).